Here is a 205-residue protein sequence, read N- to C-terminus: Large ribosomal subunit protein uL4 (205 aa).

The segment at 43-78 (ARAGTKAQKTRSEVAGGGKKPWRQKGTGNARAGTIR) is disordered.

Belongs to the universal ribosomal protein uL4 family. As to quaternary structure, part of the 50S ribosomal subunit.

One of the primary rRNA binding proteins, this protein initially binds near the 5'-end of the 23S rRNA. It is important during the early stages of 50S assembly. It makes multiple contacts with different domains of the 23S rRNA in the assembled 50S subunit and ribosome. In terms of biological role, forms part of the polypeptide exit tunnel. The polypeptide is Large ribosomal subunit protein uL4 (Halorhodospira halophila (strain DSM 244 / SL1) (Ectothiorhodospira halophila (strain DSM 244 / SL1))).